A 152-amino-acid polypeptide reads, in one-letter code: Nucleoside diphosphate kinase (152 aa).

Residues lysine 11, phenylalanine 59, arginine 87, threonine 93, arginine 104, and asparagine 114 each contribute to the ATP site. The Pros-phosphohistidine intermediate role is filled by histidine 117.

Belongs to the NDK family. As to quaternary structure, homotetramer. It depends on Mg(2+) as a cofactor.

It is found in the cytoplasm. The enzyme catalyses a 2'-deoxyribonucleoside 5'-diphosphate + ATP = a 2'-deoxyribonucleoside 5'-triphosphate + ADP. The catalysed reaction is a ribonucleoside 5'-diphosphate + ATP = a ribonucleoside 5'-triphosphate + ADP. In terms of biological role, major role in the synthesis of nucleoside triphosphates other than ATP. The ATP gamma phosphate is transferred to the NDP beta phosphate via a ping-pong mechanism, using a phosphorylated active-site intermediate. This chain is Nucleoside diphosphate kinase, found in Prochlorococcus marinus subsp. pastoris (strain CCMP1986 / NIES-2087 / MED4).